A 75-amino-acid chain; its full sequence is uncharacterized protein (75 aa).

This is an uncharacterized protein from Equus caballus (Horse).